Reading from the N-terminus, the 465-residue chain is Beta-1,2-xylosyltransferase XYXT1 (465 aa).

Residues methionine 1–lysine 11 lie on the Cytoplasmic side of the membrane. A helical; Signal-anchor for type II membrane protein membrane pass occupies residues glycine 12–tyrosine 32. Residues serine 33–arginine 465 are Lumenal-facing. N-linked (GlcNAc...) asparagine glycosylation is found at asparagine 80, asparagine 118, asparagine 125, asparagine 266, and asparagine 403.

This sequence belongs to the glycosyltransferase 61 family. In terms of tissue distribution, widely expressed.

It localises to the golgi apparatus membrane. The protein operates within glycan metabolism. In terms of biological role, glycosyltransferase involved in the xylosylation of xylan, the major hemicellulose (non-cellulosic component) of primary and secondary walls of angiosperms. Possesses beta-1,2-xylosyltransferase activity, transferring xylose from UDP-xylose to the xylan backbone. Catalyzes the addition of 2-O-xylosyl side chains to the xylan backbone. The sequence is that of Beta-1,2-xylosyltransferase XYXT1 from Oryza sativa subsp. japonica (Rice).